The chain runs to 211 residues: N-(5'-phosphoribosyl)anthranilate isomerase (211 aa).

It belongs to the TrpF family.

The enzyme catalyses N-(5-phospho-beta-D-ribosyl)anthranilate = 1-(2-carboxyphenylamino)-1-deoxy-D-ribulose 5-phosphate. The protein operates within amino-acid biosynthesis; L-tryptophan biosynthesis; L-tryptophan from chorismate: step 3/5. The sequence is that of N-(5'-phosphoribosyl)anthranilate isomerase from Nitrosomonas europaea (strain ATCC 19718 / CIP 103999 / KCTC 2705 / NBRC 14298).